Here is a 253-residue protein sequence, read N- to C-terminus: Zinc import ATP-binding protein ZnuC (253 aa).

The region spanning V6–A227 is the ABC transporter domain. Residue G38–S45 participates in ATP binding.

This sequence belongs to the ABC transporter superfamily. Zinc importer (TC 3.A.1.15.5) family. As to quaternary structure, the complex is composed of two ATP-binding proteins (ZnuC), two transmembrane proteins (ZnuB) and a solute-binding protein (ZnuA).

Its subcellular location is the cell inner membrane. It catalyses the reaction Zn(2+)(out) + ATP(in) + H2O(in) = Zn(2+)(in) + ADP(in) + phosphate(in) + H(+)(in). In terms of biological role, part of the ABC transporter complex ZnuABC involved in zinc import. Responsible for energy coupling to the transport system. The sequence is that of Zinc import ATP-binding protein ZnuC from Yersinia pestis bv. Antiqua (strain Antiqua).